Reading from the N-terminus, the 388-residue chain is F-box/LRR-repeat protein At3g59190 (388 aa).

Residues 11–64 form the F-box domain; that stretch reads KDIISNLPDALLCHVLSFLPTTEAASTSVLAKRWRFLLAFVPNLDLDNMIYDRP. LRR repeat units follow at residues 151–177, 180–205, 228–252, 313–345, and 346–371; these read KVSGTDEFTIDVGEFFLPKLKTLHLSA, FGDEGGPPFAKLISACHALEELVMIK, CENIDENPKSVSFDTPNLVYLEFTD, TMYLSSEALEVLTFCCKKAIPVFNNLIHLTVET, and DERVDWESLPILLKNCPNLETLIFEV.

The protein is F-box/LRR-repeat protein At3g59190 of Arabidopsis thaliana (Mouse-ear cress).